The sequence spans 404 residues: N-acetylglucosamine-6-phosphate deacetylase (404 aa).

Glu143 is an a divalent metal cation binding site. A substrate-binding site is contributed by 154–155; sequence AH. Residues His211 and His232 each contribute to the a divalent metal cation site. Substrate is bound by residues 235–236, Arg243, and 269–272; these read NA and DGIH. Catalysis depends on Asp294, which acts as the Proton donor/acceptor. Substrate is bound at residue 328–330; that stretch reads LSG.

The protein belongs to the metallo-dependent hydrolases superfamily. NagA family. It depends on a divalent metal cation as a cofactor.

The enzyme catalyses N-acetyl-D-glucosamine 6-phosphate + H2O = D-glucosamine 6-phosphate + acetate. Its pathway is amino-sugar metabolism; N-acetylneuraminate degradation. Functionally, hydrolyzes the N-glycolyl group from N-glycolylglucosamine 6-phosphate (GlcNGc-6-P) in the N-glycolylneuraminic acid (Neu5Gc) degradation pathway. The sequence is that of N-acetylglucosamine-6-phosphate deacetylase (amdhd2) from Danio rerio (Zebrafish).